The sequence spans 100 residues: Urease subunit gamma (100 aa).

It belongs to the urease gamma subunit family. In terms of assembly, heterotrimer of UreA (gamma), UreB (beta) and UreC (alpha) subunits. Three heterotrimers associate to form the active enzyme.

The protein localises to the cytoplasm. The catalysed reaction is urea + 2 H2O + H(+) = hydrogencarbonate + 2 NH4(+). Its pathway is nitrogen metabolism; urea degradation; CO(2) and NH(3) from urea (urease route): step 1/1. The chain is Urease subunit gamma from Chelativorans sp. (strain BNC1).